The following is a 64-amino-acid chain: Alpha-conotoxin-like Ac1.1b (64 aa).

The N-terminal stretch at 1–21 (MGMRMMFTLFLLVVLTTTVVS) is a signal peptide. The propeptide occupies 22-47 (FPSDSASDGRDDEAKDERSDMYKSKR). The segment at 23-46 (PSDSASDGRDDEAKDERSDMYKSK) is disordered. Positions 28 to 44 (SDGRDDEAKDERSDMYK) are enriched in basic and acidic residues. 2 disulfides stabilise this stretch: C51-C56 and C52-C62. C62 is modified (cysteine amide).

It belongs to the conotoxin A superfamily. Expressed by the venom duct.

Its subcellular location is the secreted. Alpha-conotoxins act on postsynaptic membranes, they bind to the nicotinic acetylcholine receptors (nAChR) and thus inhibit them. This chain is Alpha-conotoxin-like Ac1.1b, found in Conus achatinus (Little frog cone).